The following is a 2529-amino-acid chain: Zinc finger FYVE domain-containing protein 26 (2529 aa).

Disordered stretches follow at residues 584-650, 689-709, and 733-810; these read HLPE…PGPH, SSHR…SAAR, and VTSN…RFQT. Phosphoserine is present on residues S605 and S609. A compositionally biased stretch (basic and acidic residues) spans 689–701; that stretch reads SSHRTPEETKLPE. Positions 755–765 are enriched in basic residues; the sequence is SSLRRGRRTRR. Low complexity predominate over residues 778 to 796; that stretch reads SLEGTSSELSTSTSEGSLS. At S791 the chain carries Phosphoserine. Positions 797–810 are enriched in polar residues; the sequence is AVSGQVESDSRFQT. Residues 859–884 are a coiled coil; it reads MFVERYQEVIQELARVEHKIENQNSD. The disordered stretch occupies residues 1258-1286; the sequence is GLPLSTLGSPRPSENPSAERKSHSSPKDS. Residues 1263–1273 show a composition bias toward polar residues; sequence TLGSPRPSENP. The span at 1274–1283 shows a compositional bias: basic and acidic residues; the sequence is SAERKSHSSP. Residues 1488–1515 are a coiled coil; the sequence is VSDMAVQEELKSELQRKLMELRVYQKIL. Phosphoserine occurs at positions 1732, 1754, 1770, and 1772. The segment at 1762-1799 is disordered; sequence APGSALVRSPSPKERAFPQTQPPVEFVPPETPPARDQW. The segment at 1802–1862 adopts an FYVE-type zinc-finger fold; that stretch reads DETESVCMVC…VCDQCYSYYN (61 aa). The Zn(2+) site is built by C1808, C1811, C1825, C1828, C1833, C1836, C1854, and C1857. Residues 1865–1884 are disordered; the sequence is TPEESPCQSEVPDSAKNESP.

It belongs to the ZFYVE26 family. In terms of assembly, interacts with AP5Z1, AP5B1, AP5S1 and SPG11. Interacts with TTC19 and KIF13A.

Its subcellular location is the cytoplasm. The protein resides in the cytoskeleton. The protein localises to the microtubule organizing center. It localises to the centrosome. It is found in the midbody. Functionally, phosphatidylinositol 3-phosphate-binding protein required for the abscission step in cytokinesis: recruited to the midbody during cytokinesis and acts as a regulator of abscission. May also be required for efficient homologous recombination DNA double-strand break repair. The sequence is that of Zinc finger FYVE domain-containing protein 26 (Zfyve26) from Mus musculus (Mouse).